An 89-amino-acid polypeptide reads, in one-letter code: Small ribosomal subunit protein uS14 (89 aa).

The protein belongs to the universal ribosomal protein uS14 family. As to quaternary structure, part of the 30S ribosomal subunit. Contacts proteins S3 and S10.

Functionally, binds 16S rRNA, required for the assembly of 30S particles and may also be responsible for determining the conformation of the 16S rRNA at the A site. In Leuconostoc mesenteroides subsp. mesenteroides (strain ATCC 8293 / DSM 20343 / BCRC 11652 / CCM 1803 / JCM 6124 / NCDO 523 / NBRC 100496 / NCIMB 8023 / NCTC 12954 / NRRL B-1118 / 37Y), this protein is Small ribosomal subunit protein uS14.